The chain runs to 386 residues: Succinyl-diaminopimelate desuccinylase (386 aa).

His76 is a Zn(2+) binding site. The active site involves Asp78. A Zn(2+)-binding site is contributed by Asp110. Glu144 serves as the catalytic Proton acceptor. Zn(2+)-binding residues include Glu145, Glu173, and His359.

It belongs to the peptidase M20A family. DapE subfamily. As to quaternary structure, homodimer. It depends on Zn(2+) as a cofactor. Requires Co(2+) as cofactor.

The catalysed reaction is N-succinyl-(2S,6S)-2,6-diaminopimelate + H2O = (2S,6S)-2,6-diaminopimelate + succinate. It participates in amino-acid biosynthesis; L-lysine biosynthesis via DAP pathway; LL-2,6-diaminopimelate from (S)-tetrahydrodipicolinate (succinylase route): step 3/3. Its function is as follows. Catalyzes the hydrolysis of N-succinyl-L,L-diaminopimelic acid (SDAP), forming succinate and LL-2,6-diaminopimelate (DAP), an intermediate involved in the bacterial biosynthesis of lysine and meso-diaminopimelic acid, an essential component of bacterial cell walls. The sequence is that of Succinyl-diaminopimelate desuccinylase from Chromohalobacter salexigens (strain ATCC BAA-138 / DSM 3043 / CIP 106854 / NCIMB 13768 / 1H11).